A 1456-amino-acid polypeptide reads, in one-letter code: Macrophage mannose receptor 1 (1456 aa).

Positions 1-19 are cleaved as a signal peptide; sequence MRLLLLLAFISVIPVSVQL. Topologically, residues 20–1388 are extracellular; sequence LDARQFLIYN…DPQPKGSSKA (1369 aa). In terms of domain architecture, Ricin B-type lectin spans 22–142; sequence ARQFLIYNED…SGLWSRWKVY (121 aa). Cystine bridges form between Cys-35/Cys-49, Cys-74/Cys-91, Cys-102/Cys-149, Cys-168/Cys-194, Cys-182/Cys-209, Cys-247/Cys-340, and Cys-316/Cys-332. N-linked (GlcNAc...) asparagine glycosylation is present at Asn-104. Positions 163-211 constitute a Fibronectin type-II domain; the sequence is ANGAVCAFPFKFENKWYADCTSAGRSDGWLWCGTTTDYDKDKLFGFCPL. The 117-residue stretch at 225-341 folds into the C-type lectin 1 domain; sequence LTGILYQINS…CVQKLGYICK (117 aa). An N-linked (GlcNAc...) asparagine glycan is attached at Asn-344. C-type lectin domains are found at residues 369–487, 511–626, 655–778, and 807–923; these read YAGH…YICK, HGFY…FVCK, KTSM…WICQ, and YKDY…FICQ. 2 disulfides stabilise this stretch: Cys-391/Cys-486 and Cys-463/Cys-478. Asn-529 is a glycosylation site (N-linked (GlcNAc...) asparagine). 6 disulfide bridges follow: Cys-532–Cys-625, Cys-600–Cys-617, Cys-680–Cys-777, Cys-753–Cys-769, Cys-828–Cys-922, and Cys-899–Cys-914. N-linked (GlcNAc...) asparagine glycans are attached at residues Asn-926 and Asn-930. C-type lectin domains follow at residues 951 to 1079, 1101 to 1212, and 1240 to 1355; these read YKNK…YICQ, YGKS…FLCK, and FYGH…FICK. Disulfide bonds link Cys-976-Cys-1078, Cys-1051-Cys-1070, Cys-1122-Cys-1211, Cys-1189-Cys-1203, Cys-1262-Cys-1354, and Cys-1331-Cys-1346. The N-linked (GlcNAc...) asparagine glycan is linked to Asn-1159. Asn-1204 is a glycosylation site (N-linked (GlcNAc...) asparagine). The chain crosses the membrane as a helical span at residues 1389–1409; it reads AGVVTVVLLIVIGAGVAAYFF. Over 1410-1456 the chain is Cytoplasmic; it reads YKKRHALHIPQEATFENTLYFNSNLSPGTSDTKDLMGNIEQNEHAII.

As to expression, detected in macrophages.

The protein localises to the endosome membrane. It localises to the cell membrane. Mediates the endocytosis of glycoproteins by macrophages. Binds both sulfated and non-sulfated polysaccharide chains. Acts as phagocytic receptor for bacteria, fungi and other pathogens. In Mus musculus (Mouse), this protein is Macrophage mannose receptor 1 (Mrc1).